The sequence spans 687 residues: MAASEENSALFPIFILTIMAIPLVPYTMVKLSGALSKKQRTIHCQCLECDRSGKYKRSLFKKISNFSTWSNLTLVLLWVVMIFLIYYTKNMSREAQVFDPFSILGLEPGVTDSEIKKAYRRLSIQYHPDKNPDPEANKYFVEFISKAYQALTDSVSRENFEKYGHPDGRQGFQMGIALPQFLLDIDGASGGILLLWIVGVCILLPLVIAVIYLSRSSKYTGNYVMHQTLSAYYYLMKPSLAPSKVMEVFTKAAEYMEIPVRRTDDEPLQKLFMSVRSELNLDLKNMKQEQAKFWKQHPAIVKTELLIQAQLTRESGVLSPALQGDFRRVLELAPRLLEELLKMAVIPRTAQGHGWLRPAVGVVELSQCIVQAVPLSARKSSGVSSEGISPFLQLPHFSDAVVKKIARKKVKSFQDLQEMRLEDRSELLTQVAGLSATDVEDIEKVLEMMPSITVDITCETEGEEGIQEGDIVTLQAWVTLKRPNGLVGALPHAPYFPFHKEENYWVLLADSVSNNVWFSQKVSFLDEGGAITAASKAISESMEGSGAGVKETNDAVREAIEKVKGGSRLVMGKLQAPAEGTYNLTCFCLCDTWIGCDKKQALKVKVLKRTRAGTRGLVSDEGAIAEEGMEEEDEIEEEDYDDDYESEYSEDEDEKKDMDEKRGSKKANGSVKQKKESSSEESGSEEE.

At 1–8 (MAASEENS) the chain is on the lumenal side. The chain crosses the membrane as a helical span at residues 9-29 (ALFPIFILTIMAIPLVPYTMV). Residues 30-65 (KLSGALSKKQRTIHCQCLECDRSGKYKRSLFKKISN) lie on the Cytoplasmic side of the membrane. A helical membrane pass occupies residues 66 to 86 (FSTWSNLTLVLLWVVMIFLIY). The Lumenal segment spans residues 87–190 (YTKNMSREAQ…FLLDIDGASG (104 aa)). N-linked (GlcNAc...) asparagine glycosylation is present at Asn-90. The region spanning 99 to 164 (DPFSILGLEP…VSRENFEKYG (66 aa)) is the J domain. A helical transmembrane segment spans residues 191-211 (GILLLWIVGVCILLPLVIAVI). Residues 205–603 (PLVIAVIYLS…IGCDKKQALK (399 aa)) enclose the SEC63 domain. At 212–687 (YLSRSSKYTG…SSEESGSEEE (476 aa)) the chain is on the cytoplasmic side. The segment at 619 to 687 (SDEGAIAEEG…SSEESGSEEE (69 aa)) is disordered. A compositionally biased stretch (acidic residues) spans 623–654 (AIAEEGMEEEDEIEEEDYDDDYESEYSEDEDE).

In terms of assembly, interacts with OEP61/TPR7. As to expression, expressed in leaves, flower buds and flowers.

The protein localises to the endoplasmic reticulum membrane. Its function is as follows. Required for integral membrane and secreted preprotein translocation across the endoplasmic reticulum membrane. In Arabidopsis thaliana (Mouse-ear cress), this protein is DnaJ protein ERDJ2A (ERDJ2A).